Reading from the N-terminus, the 187-residue chain is Large ribosomal subunit protein uL22 (187 aa).

Positions 161-187 (APTDDAPAKKKLSKKKLARQKEKMMRE) are disordered. Over residues 169–178 (KKKLSKKKLA) the composition is skewed to basic residues.

It belongs to the universal ribosomal protein uL22 family.

This is Large ribosomal subunit protein uL22 (RpL17) from Bombyx mori (Silk moth).